Reading from the N-terminus, the 138-residue chain is Small ribosomal subunit protein uS11c (138 aa).

The disordered stretch occupies residues 1-23 (MAKPILRIGSRKNTRSGSRKNVR). Basic residues predominate over residues 9-23 (GSRKNTRSGSRKNVR).

It belongs to the universal ribosomal protein uS11 family. In terms of assembly, part of the 30S ribosomal subunit.

It localises to the plastid. Its subcellular location is the chloroplast. The protein is Small ribosomal subunit protein uS11c of Crucihimalaya wallichii (Rock-cress).